We begin with the raw amino-acid sequence, 181 residues long: MSFSDQNLIWVDLEMTGLDPETHKIIEIASIVTDSELNILAEGPVLAVHQPEEELAKMDDWCTNTHTASGLVERVRNSKISEQDAVAQTIEFLEKWVPKGVSPICGNSIGQDRRFLYKHMPELEEYFHYRYLDVSTLKELTRRWKPEVLDGFSKQGTHLALDDIRESIAELKYYRETIFKI.

An Exonuclease domain is found at 8 to 171 (LIWVDLEMTG…DDIRESIAEL (164 aa)). The active site involves Tyr-129.

Belongs to the oligoribonuclease family.

It is found in the cytoplasm. Its function is as follows. 3'-to-5' exoribonuclease specific for small oligoribonucleotides. This chain is Oligoribonuclease, found in Vibrio parahaemolyticus serotype O3:K6 (strain RIMD 2210633).